Consider the following 335-residue polypeptide: Ornithine carbamoyltransferase, catabolic (335 aa).

Residues 59–62, glutamine 86, arginine 110, and 137–140 contribute to the carbamoyl phosphate site; these read STRT and HPTQ. L-ornithine is bound by residues asparagine 169, aspartate 233, and 237–238; that span reads SM. Carbamoyl phosphate-binding positions include 274–275 and arginine 319; that span reads CL.

Belongs to the aspartate/ornithine carbamoyltransferase superfamily. OTCase family.

The protein resides in the cytoplasm. The catalysed reaction is carbamoyl phosphate + L-ornithine = L-citrulline + phosphate + H(+). It participates in amino-acid degradation; L-arginine degradation via ADI pathway; carbamoyl phosphate from L-arginine: step 2/2. Reversibly catalyzes the transfer of the carbamoyl group from carbamoyl phosphate (CP) to the N(epsilon) atom of ornithine (ORN) to produce L-citrulline. This is Ornithine carbamoyltransferase, catabolic (arcB) from Bacillus licheniformis (strain ATCC 14580 / DSM 13 / JCM 2505 / CCUG 7422 / NBRC 12200 / NCIMB 9375 / NCTC 10341 / NRRL NRS-1264 / Gibson 46).